Here is a 189-residue protein sequence, read N- to C-terminus: Class A basic helix-loop-helix protein 15 (189 aa).

Positions 1 to 12 are enriched in basic residues; the sequence is MKTKNRPPRRRA. Disordered stretches follow at residues 1-85 and 167-189; these read MKTK…ERER and TEAQPQGHLQRYSTQIHSFREGT. Position 25 is a phosphothreonine (T25). Residues 68-85 are compositionally biased toward basic and acidic residues; the sequence is GRRDSSIQRRLESNERER. One can recognise a bHLH domain in the interval 75 to 127; the sequence is QRRLESNERERQRMHKLNNAFQALREVIPHVRADKKLSKIETLTLAKNYIKSL.

As to quaternary structure, forms homodimers or heterodimers with TCF3 gene products E12 and E47. These dimers bind to the E-box site, however, heterodimer with MYOD1 does not bind target DNA. In terms of tissue distribution, expressed in brain, liver, spleen and skeletal muscle.

Its subcellular location is the nucleus. Its function is as follows. Plays a role in controlling the transcriptional activity of MYOD1, ensuring that expanding myoblast populations remain undifferentiated. Repression may occur through muscle-specific E-box occupancy by homodimers. May also negatively regulate bHLH-mediated transcription through an N-terminal repressor domain. Serves as a key regulator of acinar cell function, stability, and identity. Also required for normal organelle localization in exocrine cells and for mitochondrial calcium ion transport. May function as a unique regulator of gene expression in several different embryonic and postnatal cell lineages. Binds to the E-box consensus sequence 5'-CANNTG-3'. The sequence is that of Class A basic helix-loop-helix protein 15 (BHLHA15) from Homo sapiens (Human).